The chain runs to 510 residues: Leucine-rich repeat protein lrrA (510 aa).

LRR repeat units lie at residues 14 to 34, 35 to 59, 60 to 82, 84 to 106, 107 to 130, 132 to 152, 153 to 176, 177 to 200, 202 to 222, 224 to 245, 246 to 270, 272 to 292, 293 to 315, 316 to 340, 341 to 363, 365 to 386, 387 to 408, 410 to 432, 433 to 458, and 460 to 478; these read YRKREIVDLRKMNIDKLPPTI, GALQCKELLLSENDLITIPEEIGKL, SKVEIIDFAKNRINYIPPEIGSL, TLKQLFLSNNKLFYTPITPNIGA, LKNLTRLDLSSNQLDDLPVEISNC, ALEYLDISDNQLQSFPLEFGK, LYNLQVFNCSKNSLKSLPSEISGW, VKLEELNVSNNQLAFLPNQICLLG, LSTLNVGFNKLQQLPEELSSM, SLTNLDLKVNPPLQYVPQLSNL, RQLKILSIRNLQITHLPLGLGLLSE, IELDIRDNPQLKEIPYDIATL, INLQKLDLFGNNMRIVPREVGNL, INLQTLDLRQNKLTIDNIPSEIGKL, VNLKKLLLSNNLLIALPPEIASM, ALKEFEASNNQLQAIPTEIGEL, SGLTKINLSGNKLTSIPASFGN, SELQICDLKSNEIAELPTTLDGL, KSCTKIDLSHNMLTELPWEFGDLIGL, and ILDVGHNPLTIPPNPIVMK.

The protein localises to the cytoplasm. Its function is as follows. Involved in cytoskeleton remodeling, which is needed for normal chemotactic aggregation and efficient cell sorting during multicellular morphogenesis. The sequence is that of Leucine-rich repeat protein lrrA (lrrA) from Dictyostelium discoideum (Social amoeba).